A 192-amino-acid polypeptide reads, in one-letter code: uncharacterized protein (192 aa).

Residues H29 to S160 enclose the Nudix hydrolase domain. A Nudix box motif is present at residues G67–A89. The Mg(2+) site is built by E83 and E87.

Belongs to the Nudix hydrolase family. PCD1 subfamily. The cofactor is Mn(2+). Requires Mg(2+) as cofactor.

In terms of biological role, probably mediates the hydrolysis of some nucleoside diphosphate derivatives. This is an uncharacterized protein from Shigella sonnei (strain Ss046).